Reading from the N-terminus, the 68-residue chain is Large ribosomal subunit protein bL35 (68 aa).

The protein belongs to the bacterial ribosomal protein bL35 family.

This Wolbachia pipientis subsp. Culex pipiens (strain wPip) protein is Large ribosomal subunit protein bL35.